Here is a 47-residue protein sequence, read N- to C-terminus: Photosystem II reaction center protein K (47 aa).

Residues 1 to 10 (MAAFTLDLMA) constitute a propeptide that is removed on maturation. Residues 20–40 (APAVDVLPLIPIFFFLLVFVW) traverse the membrane as a helical segment.

Belongs to the PsbK family. PSII is composed of 1 copy each of membrane proteins PsbA, PsbB, PsbC, PsbD, PsbE, PsbF, PsbH, PsbI, PsbJ, PsbK, PsbL, PsbM, PsbT, PsbX, PsbY, Psb30/Ycf12, peripheral proteins PsbO, CyanoQ (PsbQ), PsbU, PsbV and a large number of cofactors. It forms dimeric complexes.

The protein resides in the cellular thylakoid membrane. In terms of biological role, one of the components of the core complex of photosystem II (PSII). PSII is a light-driven water:plastoquinone oxidoreductase that uses light energy to abstract electrons from H(2)O, generating O(2) and a proton gradient subsequently used for ATP formation. It consists of a core antenna complex that captures photons, and an electron transfer chain that converts photonic excitation into a charge separation. The sequence is that of Photosystem II reaction center protein K from Prochlorococcus marinus (strain MIT 9303).